The following is a 277-amino-acid chain: Glutamate racemase (277 aa).

Substrate-binding positions include 16–17 (DS) and 48–49 (YG). Catalysis depends on Cys79, which acts as the Proton donor/acceptor. 80-81 (NT) is a binding site for substrate. Residue Cys191 is the Proton donor/acceptor of the active site. A substrate-binding site is contributed by 192 to 193 (TH).

The protein belongs to the aspartate/glutamate racemases family.

The enzyme catalyses L-glutamate = D-glutamate. It functions in the pathway cell wall biogenesis; peptidoglycan biosynthesis. In terms of biological role, provides the (R)-glutamate required for cell wall biosynthesis. In Symbiobacterium thermophilum (strain DSM 24528 / JCM 14929 / IAM 14863 / T), this protein is Glutamate racemase.